The sequence spans 493 residues: Cysteine sulfinic acid decarboxylase (493 aa).

K305 carries the post-translational modification N6-(pyridoxal phosphate)lysine.

Belongs to the group II decarboxylase family. In terms of assembly, homodimer. Requires pyridoxal 5'-phosphate as cofactor. Expressed in kidney and liver not detected in lymphoid tissues and lung. Expressed in kidney, liver and brain. 7 and 4 times higher expression in kidney and liver than in brain, respectively. Low level of detection in skeletal muscle. Expressed in brain, olfactory bulb, liver, skeletal muscle and kidney with the highest expression in liver and lowest in skeletal muscle (at protein level).

It catalyses the reaction L-aspartate + H(+) = beta-alanine + CO2. The enzyme catalyses 3-sulfino-L-alanine + H(+) = hypotaurine + CO2. The catalysed reaction is L-cysteate + H(+) = taurine + CO2. Its pathway is organosulfur biosynthesis; taurine biosynthesis; hypotaurine from L-cysteine: step 2/2. With respect to regulation, activated by Mn(2+). Inhibited by bis-carboxymethyl-trithiocarbonate, ethylxanthogenacetic acid and 2,5-disulfoaniline. Not affected by Li(+) within 0.05-40 mM concentration range. Its function is as follows. Catalyzes the decarboxylation of L-aspartate, 3-sulfino-L-alanine (cysteine sulfinic acid), and L-cysteate to beta-alanine, hypotaurine and taurine, respectively. The preferred substrate is 3-sulfino-L-alanine. Does not exhibit any decarboxylation activity toward glutamate. The polypeptide is Cysteine sulfinic acid decarboxylase (Mus musculus (Mouse)).